Consider the following 50-residue polypeptide: Insulin (50 aa).

3 cysteine pairs are disulfide-bonded: Cys-7–Cys-36, Cys-19–Cys-49, and Cys-35–Cys-40.

Belongs to the insulin family. In terms of assembly, heterodimer of a B chain and an A chain linked by two disulfide bonds.

It localises to the secreted. Insulin decreases blood glucose concentration. It increases cell permeability to monosaccharides, amino acids and fatty acids. It accelerates glycolysis, the pentose phosphate cycle, and glycogen synthesis in liver. This chain is Insulin (ins), found in Oncorhynchus gorbuscha (Pink salmon).